The following is a 1673-amino-acid chain: Leucine-rich repeat- and IQ domain-containing protein 1 (1673 aa).

Disordered regions lie at residues 22-48 (ISISSLENDEVENDSVSDTQSDSSDTD) and 189-208 (LEEKDKETLEAQNEREKRTF). Residues 34-59 (NDSVSDTQSDSSDTDLLELPESVLHY) form an LRR 1 repeat. The stretch at 216–239 (QCWMRQFEVEKKHLEDLQKQDQDK) is one LRR 2 repeat. Residues 291-320 (RYDAAVKIQATYRASVTYRKYSPIIKEQME) enclose the IQ 1 domain. The interval 324–374 (RRAQELKEKEAKIRQKEEEKRRRLEEEQRVEEEKKKKMLEERRRREREYEE) is disordered. Basic and acidic residues predominate over residues 326-374 (AQELKEKEAKIRQKEEEKRRRLEEEQRVEEEKKKKMLEERRRREREYEE). The stretch at 491–516 (LPKLKINENLSKNQCSEQPSDQEFNA) is one LRR 3 repeat. 2 disordered regions span residues 544-658 (ESDT…EEIP) and 679-702 (EGEADLQDSASGKLAPSEEAGSHS). Composition is skewed to basic and acidic residues over residues 549-567 (TEEHVEHVREEKVGQETEK) and 588-602 (EETREGLAEEIEIKE). Residues 603–629 (MTQQGGPSDENNSSPISMQKSLPSLTP) show a composition bias toward polar residues. An LRR 4 repeat occupies 641–665 (LEEDQETDLKSERIEEIPEEGVLSC). Over residues 647–656 (TDLKSERIEE) the composition is skewed to basic and acidic residues. 11 LRR repeats span residues 830-852 (CSNLQILSLRRCGLTSLQGLSHC), 853-873 (TRLKYIDAQENHIEAISCENL), 874-894 (ENLSVVLLNNNLLTSIHGFDG), 895-919 (CTNLQSLELSHNKITRISGLESLKY), 921-939 (QELTVDHNQLISTKGLCEA), 940-961 (PTIVYLDCSHNHLTGIDGIGNC), 962-983 (GLLQIIKLQGNYLREPPSLRNH), 984-1005 (VLLRELHLDDNSISSVEGLSSC), 1007-1029 (LPLLQYLSISQNSLATIVPLFHL), 1030-1054 (VSLEKLDVSNNCLSDLTNVMCWFNA), and 1067-1090 (PVLQEINWRDSILKTLPALRVLNG). Disordered regions lie at residues 1163–1230 (AHEQ…HCEE) and 1308–1330 (PTTTEPLQDPLINNQTTSNEERR). Composition is skewed to polar residues over residues 1168–1226 (DVNT…PSTS) and 1308–1325 (PTTTEPLQDPLINNQTTS). IQ domains follow at residues 1280–1309 (PTKAAMVIQAQWRSYIAHRQINCSAEMHPT) and 1340–1369 (REKAALHIQAVWKGFILRKKLATARKAIKD). The LRR 16 repeat unit spans residues 1378 to 1405 (EIDLEDFEFDEDALEKDWPALDSTGFPS).

The protein is Leucine-rich repeat- and IQ domain-containing protein 1 (Lrriq1) of Mus musculus (Mouse).